A 389-amino-acid chain; its full sequence is Chalcone synthase 1 (389 aa).

Residue cysteine 163 is part of the active site.

It belongs to the thiolase-like superfamily. Chalcone/stilbene synthases family.

The catalysed reaction is (E)-4-coumaroyl-CoA + 3 malonyl-CoA + 3 H(+) = 2',4,4',6'-tetrahydroxychalcone + 3 CO2 + 4 CoA. The protein operates within secondary metabolite biosynthesis; flavonoid biosynthesis. In terms of biological role, the primary product of this enzyme is 4,2',4',6'-tetrahydroxychalcone (also termed naringenin-chalcone or chalcone) which can under specific conditions spontaneously isomerize into naringenin. The chain is Chalcone synthase 1 (CHS1) from Citrus sinensis (Sweet orange).